Here is a 144-residue protein sequence, read N- to C-terminus: Large ribosomal subunit protein uL15 (144 aa).

The tract at residues 1-58 (MHLNTLSPAPGSHKARKRCGRGIGSGIGKTGGRGHKGQKSRSGGSVRPGFEGGQMPLK) is disordered. Residues 21 to 31 (RGIGSGIGKTG) are compositionally biased toward gly residues.

It belongs to the universal ribosomal protein uL15 family. Part of the 50S ribosomal subunit.

Functionally, binds to the 23S rRNA. This is Large ribosomal subunit protein uL15 from Colwellia psychrerythraea (strain 34H / ATCC BAA-681) (Vibrio psychroerythus).